The sequence spans 228 residues: Small ribosomal subunit protein uS3 (228 aa).

In terms of domain architecture, KH type-2 spans 39–107 (VRAYLQDKLK…PVHINIEEIR (69 aa)).

Belongs to the universal ribosomal protein uS3 family. Part of the 30S ribosomal subunit. Forms a tight complex with proteins S10 and S14.

Its function is as follows. Binds the lower part of the 30S subunit head. Binds mRNA in the 70S ribosome, positioning it for translation. This Ectopseudomonas mendocina (strain ymp) (Pseudomonas mendocina) protein is Small ribosomal subunit protein uS3.